A 140-amino-acid polypeptide reads, in one-letter code: Hexon-interlacing protein (140 aa).

Residues Leu100–Gln127 adopt a coiled-coil conformation.

The protein belongs to the adenoviridae hexon-interlacing protein family. Homotrimer. Interacts with hexon protein; this interaction tethers the hexons together. Self-interacts with adjacent proteins. Interacts with kinesin light chain KLC1; this interaction leads to capsid disruption at the nuclear pore complex during virus entry into host cell.

The protein resides in the virion. It is found in the host nucleus. In terms of biological role, structural component of the virion that acts as a cement protein on the capsid exterior and forms triskelion structures consisting of three molecules that stabilize three hexon trimers at the center of each icosahedral facet and fixes the peripentonal hexons. Dispensable for assembly. During virus entry, recruits the anterograde motor kinesin-1 to the capsid docked at the nuclear pore complex thereby subjecting the docked capsid to a pulling force. The resulting tension leads to capsid disruption, dispersion of capsid fragments toward cell periphery and eventually viral DNA entry into the host nucleus. The polypeptide is Hexon-interlacing protein (Human adenovirus C serotype 5 (HAdV-5)).